A 198-amino-acid polypeptide reads, in one-letter code: Recombination protein RecR (198 aa).

A C4-type zinc finger spans residues 57–72; it reads CSICGNLTESDPCAIC. Residues 80–175 form the Toprim domain; that stretch reads TTILVVEESK…KVTRLARGLA (96 aa).

The protein belongs to the RecR family.

In terms of biological role, may play a role in DNA repair. It seems to be involved in an RecBC-independent recombinational process of DNA repair. It may act with RecF and RecO. In Lactococcus lactis subsp. cremoris (strain MG1363), this protein is Recombination protein RecR.